The primary structure comprises 164 residues: 3-isopropylmalate dehydratase small subunit 1 (164 aa).

Belongs to the LeuD family. LeuD type 2 subfamily. As to quaternary structure, heterodimer of LeuC and LeuD.

It catalyses the reaction (2R,3S)-3-isopropylmalate = (2S)-2-isopropylmalate. The protein operates within amino-acid biosynthesis; L-leucine biosynthesis; L-leucine from 3-methyl-2-oxobutanoate: step 2/4. Catalyzes the isomerization between 2-isopropylmalate and 3-isopropylmalate, via the formation of 2-isopropylmaleate. The polypeptide is 3-isopropylmalate dehydratase small subunit 1 (leuD1) (Pyrococcus abyssi (strain GE5 / Orsay)).